The primary structure comprises 162 residues: MGLETEKADVQLFMDDDSYSHHSGVDYGDPEKFVDSGQDRDPHRLNSQLKVGFEDVIAEPVTTHSFDKVWICSHALFEISKYVLYKFLTVFLAIPLAFVAGILFATLSCLHIWIIMPFVKTCLMVLPSVQTIWKSVTDVIIAPLCTSVGRSFSSISLRLSQD.

The Cytoplasmic portion of the chain corresponds to M1–K86. Residue Y19 is modified to Phosphotyrosine; by SRC. Phosphoserine is present on residues S20 and S23. Y27 is modified (phosphotyrosine; by SRC). A Phosphoserine modification is found at S36. Residues F87–L107 constitute an intramembrane region (helical). The Cytoplasmic segment spans residues S108–D162.

Belongs to the caveolin family. As to quaternary structure, monomer or homodimer. Interacts with CAV1; the interaction forms a stable heterooligomeric complex that is required for targeting to lipid rafts and for caveolae formation. Tyrosine phosphorylated forms do not form heterooligomers with the Tyr-19-phosphorylated form existing as a monomer or dimer, and the Tyr-27-form as a monomer only. Interacts (tyrosine phosphorylated form) with the SH2 domain-containing proteins, RASA1, NCK1 and SRC. Interacts (tyrosine phosphorylated form) with INSR, the interaction (Tyr-27-phosphorylated form) is increased on insulin stimulation. Interacts (Tyr-19 phosphorylated form) with MAPK1 (phosphorylated form); the interaction, promoted by insulin, leads to nuclear location and MAPK1 activation. Interacts with STAT3; the interaction is increased on insulin-induced tyrosine phosphorylation leading to STAT activation. Phosphorylated on serine and tyrosine residues. CAV1 promotes phosphorylation on Ser-23 which then targets the complex to the plasma membrane, lipid rafts and caveolae. Phosphorylation on Ser-36 appears to modulate mitosis in endothelial cells. Phosphorylation on both Tyr-19 and Tyr-27 is required for insulin-induced 'Ser-727' phosphorylation of STAT3 and its activation. Phosphorylation on Tyr-19 is required for insulin-induced phosphorylation of MAPK1 and DNA binding of STAT3. Tyrosine phosphorylation is induced by both EGF and insulin (By. similarity).

It localises to the nucleus. Its subcellular location is the cytoplasm. The protein localises to the golgi apparatus membrane. It is found in the cell membrane. The protein resides in the membrane. It localises to the caveola. Its function is as follows. May act as a scaffolding protein within caveolar membranes. Interacts directly with G-protein alpha subunits and can functionally regulate their activity. Acts as an accessory protein in conjunction with CAV1 in targeting to lipid rafts and driving caveolae formation. The Ser-36 phosphorylated form has a role in modulating mitosis in endothelial cells. Positive regulator of cellular mitogenesis of the MAPK signaling pathway. Required for the insulin-stimulated nuclear translocation and activation of MAPK1 and STAT3, and the subsequent regulation of cell cycle progression. The protein is Caveolin-2 (CAV2) of Otolemur garnettii (Small-eared galago).